We begin with the raw amino-acid sequence, 327 residues long: L-lactate dehydrogenase 1 (327 aa).

NAD(+)-binding positions include valine 21, aspartate 42, lysine 47, tyrosine 72, and 86–87; that span reads GA. Substrate-binding positions include glutamine 89, arginine 95, and 127 to 130; that span reads NPVD. NAD(+) contacts are provided by residues 125 to 127 and serine 150; that span reads AAN. 155–158 is a binding site for substrate; it reads DSAR. Arginine 160 and histidine 175 together coordinate beta-D-fructose 1,6-bisphosphate. Histidine 182 acts as the Proton acceptor in catalysis. Tyrosine 227 carries the post-translational modification Phosphotyrosine. Position 236 (threonine 236) interacts with substrate.

It belongs to the LDH/MDH superfamily. LDH family. Homotetramer.

The protein localises to the cytoplasm. The catalysed reaction is (S)-lactate + NAD(+) = pyruvate + NADH + H(+). The protein operates within fermentation; pyruvate fermentation to lactate; (S)-lactate from pyruvate: step 1/1. Allosterically activated by fructose 1,6-bisphosphate (FBP). Functionally, catalyzes the conversion of lactate to pyruvate. The polypeptide is L-lactate dehydrogenase 1 (Enterococcus faecalis (strain ATCC 700802 / V583)).